A 305-amino-acid chain; its full sequence is uncharacterized protein (305 aa).

A run of 10 helical transmembrane segments spans residues 4 to 24 (LNIY…FNLA), 38 to 58 (AWRF…TEGI), 67 to 87 (AVSY…LFFV), 95 to 115 (VNGA…ARII), 125 to 145 (VLGI…GSIE), 152 to 172 (ISGG…YGVL), 183 to 203 (LSTT…VSLF), 215 to 235 (IGVW…GYLW), 250 to 270 (LFFN…GTPI), and 272 to 292 (VFQV…SGVI). 2 EamA domains span residues 15-140 (IFTG…LVIT) and 164-290 (VCWA…TASG).

It belongs to the EamA transporter family.

It localises to the cell membrane. This is an uncharacterized protein from Bacillus subtilis (strain 168).